Here is a 31-residue protein sequence, read N- to C-terminus: Cyclotide hyen-I (31 aa).

A cross-link (cyclopeptide (Gly-Asp)) is located at residues 1–31; that stretch reads GSTPCGESCVWIPCISGIVGCSCSNKVCYMD. Intrachain disulfides connect Cys5/Cys21, Cys9/Cys23, and Cys14/Cys28.

In terms of processing, this is a cyclic peptide. As to expression, detected in seeds (at protein level).

In terms of biological role, probably participates in a plant defense mechanism. The protein is Cyclotide hyen-I of Pigea enneasperma (Spade flower).